A 311-amino-acid polypeptide reads, in one-letter code: Aspartate carbamoyltransferase catalytic subunit (311 aa).

The carbamoyl phosphate site is built by arginine 55 and threonine 56. Residue lysine 85 participates in L-aspartate binding. The carbamoyl phosphate site is built by arginine 106, histidine 135, and glutamine 138. Residues arginine 168 and arginine 230 each contribute to the L-aspartate site. Carbamoyl phosphate contacts are provided by leucine 268 and proline 269.

Belongs to the aspartate/ornithine carbamoyltransferase superfamily. ATCase family. In terms of assembly, heterododecamer (2C3:3R2) of six catalytic PyrB chains organized as two trimers (C3), and six regulatory PyrI chains organized as three dimers (R2).

It catalyses the reaction carbamoyl phosphate + L-aspartate = N-carbamoyl-L-aspartate + phosphate + H(+). It participates in pyrimidine metabolism; UMP biosynthesis via de novo pathway; (S)-dihydroorotate from bicarbonate: step 2/3. Its function is as follows. Catalyzes the condensation of carbamoyl phosphate and aspartate to form carbamoyl aspartate and inorganic phosphate, the committed step in the de novo pyrimidine nucleotide biosynthesis pathway. This Escherichia fergusonii (strain ATCC 35469 / DSM 13698 / CCUG 18766 / IAM 14443 / JCM 21226 / LMG 7866 / NBRC 102419 / NCTC 12128 / CDC 0568-73) protein is Aspartate carbamoyltransferase catalytic subunit.